The following is a 282-amino-acid chain: MASKRWCFTLNYKTAVERESFISLFSRDELNYFVCGDETAPTTNQKHLQGYVSLKKMIRLGGLKKKFGYRAHWEIAKGDDFQNRDYCTKETLISEIGAPVKKGSNQRKIMDLYLQDPEEMQLKDPDTALRCNAKRLRIEYCSSFAVISLRPWQSELHRVLMAEPDDRTIIWVYGSDGGEGKSTFAKELIKYGWFYTAGGKTQDILYMYAQDPERNIAFDVPRCSSEMMNYQAMEMLKNRVFASTKYRPVDLCVRKKVHLIVFANVSPDPTKISEDRIVIINC.

A CRESS-DNA virus Rep endonuclease domain is found at 1–99; the sequence is MASKRWCFTL…ETLISEIGAP (99 aa). Positions 7–10 match the RCR-1 motif; that stretch reads CFTL. A divalent metal cation-binding residues include Glu-38 and His-47. An RCR-2 motif is present at residues 47–49; the sequence is HLQ. Positions 56 to 77 match the Nuclear localization signal motif; sequence KMIRLGGLKKKFGYRAHWEIAK. The active-site For DNA cleavage activity is Tyr-86. The short motif at 86–89 is the RCR-3 element; that stretch reads YCTK. Ser-94 is an a divalent metal cation binding site. 174 to 182 provides a ligand contact to ATP; the sequence is GSDGGEGKS.

It belongs to the nanoviridea/circoviridae replication-associated protein family. In terms of assembly, homooligomer (Potential). Rep binds to repeated DNA motifs (iterons). Mg(2+) is required as a cofactor. Requires Mn(2+) as cofactor.

Its subcellular location is the host nucleus. The catalysed reaction is ATP + H2O = ADP + phosphate + H(+). In terms of biological role, initiates and terminates the replication only of its own subviral DNA molecule. The closed circular ssDNA genome is first converted to a superhelical dsDNA. Rep binds a specific hairpin at the genome origin of replication. Introduces an endonucleolytic nick within the intergenic region of the genome, thereby initiating the rolling circle replication (RCR). Following cleavage, binds covalently to the 5'-phosphate of DNA as a tyrosyl ester. The cleavage gives rise to a free 3'-OH that serves as a primer for the cellular DNA polymerase. The polymerase synthesizes the (+) strand DNA by rolling circle mechanism. After one round of replication, a Rep-catalyzed nucleotidyl transfer reaction releases a circular single-stranded virus genome, thereby terminating the replication. Displays origin-specific DNA cleavage, nucleotidyl transferase, ATPase and helicase activities. The sequence is that of Para-Rep C1 (C1) from Faba bean necrotic yellows C11 alphasatellite (FBNYC11A).